The following is a 901-amino-acid chain: Putative receptor protein kinase CRINKLY4 (901 aa).

A signal peptide spans 1–24 (MDHVPALVLAGCCFLALLPGWACG). Residues 25-423 (LGSMSSIAVS…SRKLMAFQMR (399 aa)) lie on the Extracellular side of the membrane. Repeat copies occupy residues 33-68 (VSYGEDGPVFCGLNSDGSHLVACFGADASVLYGAPP), 72-107 (FLGLTAGDGFVCGLLLDTRQPYCWGSNSYVKSGVPQ), 125-160 (LCALRAAQDGGRGSSAATSLIDCWGYNMTATHAVDE), 162-195 (VSTVSAGSVFNCGLFARNRTVFCWGDETVSGVVG), 203-236 (FQSIGAGGYHVCGVLENAQVFCWGRSLEMQQVVP), 253-287 (MSTVVGGRFHACGIRSLDHQVACWGFTLHNSTSPP), and 292-330 (MYALVAGDYFTCGVPAETSLMPRCWGNSGPLALPMAVPP). Residues 33–330 (VSYGEDGPVF…PLALPMAVPP (298 aa)) are 7 X 36 AA repeats. 2 N-linked (GlcNAc...) asparagine glycosylation sites follow: asparagine 151 and asparagine 179. N-linked (GlcNAc...) asparagine glycosylation occurs at asparagine 282. 3 disulfides stabilise this stretch: cysteine 338-cysteine 365, cysteine 368-cysteine 382, and cysteine 372-cysteine 390. The stretch at 357–391 (CKPANSRLCLPCSTGCPEGLYESSPCNATADRVCQ) is one TNFR-Cys repeat. Asparagine 383 is a glycosylation site (N-linked (GlcNAc...) asparagine). Residues 424–444 (IFVAEIVFAVVLVLSVSVTTC) traverse the membrane as a helical segment. Topologically, residues 445–901 (LYVRHKLRHC…QENLYLQHNF (457 aa)) are cytoplasmic. The region spanning 505-712 (FSEDSQVGKG…EILSGRKAID (208 aa)) is the Protein kinase domain. Residues 511–519 (VGKGSFSCV) and lysine 533 each bind ATP. The active-site Proton acceptor is aspartate 634. The segment at 845 to 876 (VTSSQRRKSSASEADIVGRRATDGRNVGSSIG) is disordered.

Belongs to the protein kinase superfamily. Ser/Thr protein kinase family. As to quaternary structure, homodimer.

It is found in the cell membrane. Its subcellular location is the endosome. It localises to the multivesicular body membrane. The catalysed reaction is L-seryl-[protein] + ATP = O-phospho-L-seryl-[protein] + ADP + H(+). It carries out the reaction L-threonyl-[protein] + ATP = O-phospho-L-threonyl-[protein] + ADP + H(+). In terms of biological role, putative receptor protein kinase. Could play a role in a differentiation signal. The CRINKLY4 (CR4) mutation affects leaf epidermis differentiation such that cell size and morphology are altered, and surface functions are compromised, allowing graft-like fusions between organs. The polypeptide is Putative receptor protein kinase CRINKLY4 (CR4) (Zea mays (Maize)).